Reading from the N-terminus, the 320-residue chain is 3-O-acetylpapaveroxine carboxylesterase CXE1 (320 aa).

Residues His72–Gly74 carry the Involved in the stabilization of the negatively charged intermediate by the formation of the oxyanion hole motif. Active-site residues include Ser158, Asp262, and His292.

Belongs to the 'GDXG' lipolytic enzyme family.

The catalysed reaction is 3-O-acetylpapaveroxine + H2O = narcotine hemiacetal + acetate + H(+). The protein operates within alkaloid biosynthesis. Functionally, carboxylesterase involved in the biosynthesis of the benzylisoquinoline alkaloid noscapine. Converts 3-O-acetylpapaveroxine to papaveroxine which spontaneously rearranges to narcotine hemiacetal. This chain is 3-O-acetylpapaveroxine carboxylesterase CXE1, found in Papaver somniferum (Opium poppy).